The primary structure comprises 156 residues: MRTYDDTFSGQRIYPGKGKLYVRGDSKIFRFQNGKSESLFLQRKNPRRIAWTVLYRRQHKKGISEEVAKKRSRRTVKAQRAIVGASLEVIKERRSMRPEARSAARLAAIKESKAKKQETQAAKKAEKAKNAANPKARVTSKQGAKGAPVKVAAKSR.

The segment covering 110 to 129 has biased composition (basic and acidic residues); it reads KESKAKKQETQAAKKAEKAK. Residues 110-156 form a disordered region; sequence KESKAKKQETQAAKKAEKAKNAANPKARVTSKQGAKGAPVKVAAKSR. The span at 130–156 shows a compositional bias: low complexity; it reads NAANPKARVTSKQGAKGAPVKVAAKSR.

This sequence belongs to the eukaryotic ribosomal protein eL24 family. Component of the large ribosomal subunit (LSU). Mature N.crassa ribosomes consist of a small (40S) and a large (60S) subunit. The 40S small subunit contains 1 molecule of ribosomal RNA (18S rRNA) and at least 32 different proteins. The large 60S subunit contains 3 rRNA molecules (26S, 5.8S and 5S rRNA) and at least 42 different proteins.

The protein resides in the cytoplasm. Functionally, component of the ribosome, a large ribonucleoprotein complex responsible for the synthesis of proteins in the cell. The small ribosomal subunit (SSU) binds messenger RNAs (mRNAs) and translates the encoded message by selecting cognate aminoacyl-transfer RNA (tRNA) molecules. The large subunit (LSU) contains the ribosomal catalytic site termed the peptidyl transferase center (PTC), which catalyzes the formation of peptide bonds, thereby polymerizing the amino acids delivered by tRNAs into a polypeptide chain. The nascent polypeptides leave the ribosome through a tunnel in the LSU and interact with protein factors that function in enzymatic processing, targeting, and the membrane insertion of nascent chains at the exit of the ribosomal tunnel. The protein is Large ribosomal subunit protein eL24 (rpl-24) of Neurospora crassa (strain ATCC 24698 / 74-OR23-1A / CBS 708.71 / DSM 1257 / FGSC 987).